A 283-amino-acid polypeptide reads, in one-letter code: 4-diphosphocytidyl-2-C-methyl-D-erythritol kinase (283 aa).

K10 is an active-site residue. 95 to 105 is a binding site for ATP; sequence PVAAGLGGGSS. D137 is a catalytic residue.

This sequence belongs to the GHMP kinase family. IspE subfamily.

The enzyme catalyses 4-CDP-2-C-methyl-D-erythritol + ATP = 4-CDP-2-C-methyl-D-erythritol 2-phosphate + ADP + H(+). It participates in isoprenoid biosynthesis; isopentenyl diphosphate biosynthesis via DXP pathway; isopentenyl diphosphate from 1-deoxy-D-xylulose 5-phosphate: step 3/6. In terms of biological role, catalyzes the phosphorylation of the position 2 hydroxy group of 4-diphosphocytidyl-2C-methyl-D-erythritol. This chain is 4-diphosphocytidyl-2-C-methyl-D-erythritol kinase, found in Limosilactobacillus reuteri (strain DSM 20016) (Lactobacillus reuteri).